The chain runs to 509 residues: Probable malate:quinone oxidoreductase (509 aa).

Positions 490-509 (LGLNEKEPVSGASEKELVYS) are disordered. Basic and acidic residues predominate over residues 493-509 (NEKEPVSGASEKELVYS).

Belongs to the MQO family. It depends on FAD as a cofactor.

The enzyme catalyses (S)-malate + a quinone = a quinol + oxaloacetate. The protein operates within carbohydrate metabolism; tricarboxylic acid cycle; oxaloacetate from (S)-malate (quinone route): step 1/1. This is Probable malate:quinone oxidoreductase from Geobacillus sp. (strain WCH70).